The sequence spans 971 residues: MYRAGAVLLRGATRTRLLAAASAHQSFATFSQRNQSILMMKSMELAGNSGERRFYSTHDDPIAVDDSLELYKDLGGMSPIQVPADMPNVPMLAINRYPLFPGFIKKVDIVKDDNLKALIRRQLSLKQPYAGVFVKRDDENKEETITSLSEVYPTGSFVQIIEVRDQGSVLELVLSAHRRIRALEPIDEITPKNETPLNGRRARGKRAASATSPLTPPPSPPPLAPSVASVAPEISATEEKEEKTTPPSATGEKQKKGIIMVRTENVVAEPVPKNNETKATMMAIVQTIRDVVQFNQLFGQQINLLLHPSQNVIDNPVYLCDLVATLVQSAETKDLQEMMDEIDVSKRLKIALLLIQKEKAVAKLKYDINKDVEKKVQDHHRKYLLNEQLKVIKKELGIEKDEKTTIIEKIDERIKTLAVPEYALKVINEEKTKLQFLDPHSSEFSVTRNYLEWLTSVPWGLTSPENRRLSVAKKALDEGHYGMKDVKERIMEFIAVNLLRKSIGGKILCFHGPPGVGKTSIAKSIATALNREYFRFSVGGMTDVAEIKGHRRTYVGAMPGKMIQCMKKVKTENPLVLIDEVDKIGGAGFHGDPASALLELLDPEQNANFNDHFLDVPVDLSRVLFICTANEISKIPGPLRDRMEMIDVSGYLAEEKVEIAHQHLIPQLRKDTSLATEQLKIEDSALEELIKHYCRESGVRNLQQHIERIFRKAALQIAEQQNEDEEPAEKATTAITENSEAEPITSTSSADCLKSSAEQIVVCTENLQKFVGRPKFTSDRMYEVTPPGVIMGLAWTAMGGSALYIETVLKRPVDLTNDKDGSIETTGNLGDVMKESVRTALTVAKGILAREQPDNKFFDKAHIHIHVPEGATPKDGPSAGVTLVSSLLSLALDRPVVQDMAMTGEISLTGKVLPVGGIREKVIAARRVGAKRVFLPNENRRDFDDLPEFMKSELDIRFVSHYDELYEHLFQ.

Residues 1-55 (MYRAGAVLLRGATRTRLLAAASAHQSFATFSQRNQSILMMKSMELAGNSGERRFY) constitute a mitochondrion transit peptide. The region spanning 89-359 (VPMLAINRYP…IALLLIQKEK (271 aa)) is the Lon N-terminal domain. Residues 190-255 (TPKNETPLNG…PPSATGEKQK (66 aa)) form a disordered region. Positions 214 to 224 (LTPPPSPPPLA) are enriched in pro residues. An ATP-binding site is contributed by 512–519 (GPPGVGKT). The segment at 718–749 (AEQQNEDEEPAEKATTAITENSEAEPITSTSS) is disordered. The span at 733-749 (TAITENSEAEPITSTSS) shows a compositional bias: polar residues. The region spanning 784–971 (VTPPGVIMGL…YDELYEHLFQ (188 aa)) is the Lon proteolytic domain. Active-site residues include Ser878 and Lys921.

This sequence belongs to the peptidase S16 family. Homohexamer or homoheptamer. Organized in a ring with a central cavity.

It localises to the mitochondrion matrix. The enzyme catalyses Hydrolysis of proteins in presence of ATP.. Functionally, ATP-dependent serine protease that mediates the selective degradation of misfolded, unassembled or oxidatively damaged polypeptides as well as certain short-lived regulatory proteins in the mitochondrial matrix. May also have a chaperone function in the assembly of inner membrane protein complexes. Participates in the regulation of mitochondrial gene expression and in the maintenance of the integrity of the mitochondrial genome. Binds to mitochondrial DNA in a site-specific manner. Involved in the degradation of transcription factor atfs-1 in the mitochondrion. In Caenorhabditis elegans, this protein is Lon protease homolog, mitochondrial.